Reading from the N-terminus, the 117-residue chain is Nuclear transition protein 2 (117 aa).

Positions 1–117 (MDTKMQSLPT…KRRSSGRRYK (117 aa)) are disordered. A compositionally biased stretch (low complexity) spans 7–26 (SLPTTHPHPHSSSRPQSHTS). Residues H12, H14, H16, H24, C32, C34, C38, and C41 each contribute to the Zn(2+) site. Residues 44–53 (AGHAGSSSSP) are compositionally biased toward low complexity. Basic residues-rich tracts occupy residues 60 to 77 (KHPK…RPSH) and 93 to 117 (SKRK…RRYK). Positions 90–98 (GKVSKRKAV) match the Nuclear localization signal motif. Residue S112 is modified to Phosphoserine.

This sequence belongs to the nuclear transition protein 2 family.

It is found in the nucleus. It localises to the chromosome. Functionally, plays a key role in the replacement of histones to protamine in the elongating spermatids of mammals. In condensing spermatids, loaded onto the nucleosomes, where it promotes the recruitment and processing of protamines, which are responsible for histone eviction. The histone H2AB1-H2BC1/TH2B dimer is required for loading of TNP2 onto chromatin. This chain is Nuclear transition protein 2, found in Mus musculus (Mouse).